A 171-amino-acid polypeptide reads, in one-letter code: Lipoprotein signal peptidase (171 aa).

Transmembrane regions (helical) follow at residues 12 to 32, 67 to 87, and 93 to 113; these read WYWV…WVLA, WQRW…TVWL, and SLLK…GNLV. Catalysis depends on residues aspartate 123 and aspartate 141. The chain crosses the membrane as a helical span at residues 137-157; the sequence is FNIADSAICIGAVLIIWDAFL.

Belongs to the peptidase A8 family.

The protein localises to the cell inner membrane. The catalysed reaction is Release of signal peptides from bacterial membrane prolipoproteins. Hydrolyzes -Xaa-Yaa-Zaa-|-(S,diacylglyceryl)Cys-, in which Xaa is hydrophobic (preferably Leu), and Yaa (Ala or Ser) and Zaa (Gly or Ala) have small, neutral side chains.. Its pathway is protein modification; lipoprotein biosynthesis (signal peptide cleavage). Its function is as follows. This protein specifically catalyzes the removal of signal peptides from prolipoproteins. This is Lipoprotein signal peptidase from Shewanella baltica (strain OS195).